A 901-amino-acid polypeptide reads, in one-letter code: Viral-enhancing factor (901 aa).

The 304-residue stretch at 27 to 330 folds into the Peptidase M60 domain; that stretch reads HRRTEVGVVL…IFTWLYNPQR (304 aa). N-linked (GlcNAc...) asparagine; by host glycosylation is found at N65, N265, N339, N349, N540, N594, N595, N642, N683, and N698.

Involved in disruption of the peritrophic membrane and fusion of nucleocapsids with midgut cells. This is Viral-enhancing factor (VEF) from Trichoplusia ni (Cabbage looper).